The following is a 95-amino-acid chain: Non-specific lipid-transfer protein (95 aa).

3 cysteine pairs are disulfide-bonded: C4-C52, C14-C29, and C50-C90.

Belongs to the plant LTP family. Seeds.

In terms of biological role, plant non-specific lipid-transfer proteins transfer phospholipids as well as galactolipids across membranes. May play a role in wax or cutin deposition in the cell walls of expanding epidermal cells and certain secretory tissues. In Eleusine coracana (Indian finger millet), this protein is Non-specific lipid-transfer protein.